Reading from the N-terminus, the 507-residue chain is Sperm-associated antigen 6 (507 aa).

8 ARM repeats span residues 31 to 70 (PQNI…RLAN), 73 to 112 (DDLA…AVGK), 115 to 154 (PQLA…YIAR), 157 to 196 (TELS…DISK), 199 to 238 (PELA…QIAK), 241 to 280 (VDLA…EIAK), 325 to 365 (ENLA…QLGR), and 402 to 441 (KAIK…KVLP).

As to quaternary structure, interacts with SPAG16 and SPAG17. In terms of tissue distribution, highly expressed in testis. Not detected in prostate, ovary, spleen, thymus, small intestine, colon and peripheral blood leukocytes.

Its subcellular location is the cytoplasm. It localises to the cytoskeleton. It is found in the cell projection. The protein resides in the cilium. The protein localises to the flagellum. Its subcellular location is the cilium axoneme. Important for structural integrity of the central apparatus in the sperm tail and for flagellar motility. This Mus musculus (Mouse) protein is Sperm-associated antigen 6 (Spag6).